The primary structure comprises 309 residues: Vacuolar membrane protein YOR292C (309 aa).

Topologically, residues 1-52 (MPLQLFGRDQIVVHYDNGNMSNDDQNHQSVLGSWTRRAAAALRTLMNKRIQR) are vacuolar. N-linked (GlcNAc...) asparagine glycosylation occurs at N19. A helical membrane pass occupies residues 53–73 (ITLTHWLLLVIWVTSLWKFTS). Residues 74 to 81 (HYRQLYAN) lie on the Cytoplasmic side of the membrane. The helical transmembrane segment at 82–102 (SAVFATLCTNILLFGISDILA) threads the bilayer. Residues 103–183 (QSIACFYSYH…KTDTFDFFRW (81 aa)) are Vacuolar-facing. N-linked (GlcNAc...) asparagine glycosylation is present at N121. A helical membrane pass occupies residues 184-204 (GCFMFWGFFISFFQAPWYKFL). Topologically, residues 205–225 (NFFYTEDPTVVQVFERVLSDQ) are cytoplasmic. A helical transmembrane segment spans residues 226–246 (LLYSPISLYCFFMFSNYVMEG). Residues 247 to 260 (GDKDTLGKKIQRLY) lie on the Vacuolar side of the membrane. The helical transmembrane segment at 261-281 (ISTLGCNYLVWPMVQFINFLI) threads the bilayer. Residues 282 to 309 (MPRDFQAPFSSSVGVVWNCFLSMRNASK) are Cytoplasmic-facing.

Belongs to the peroxisomal membrane protein PXMP2/4 family. Post-translationally, N-glycosylated.

Its subcellular location is the vacuole membrane. This Saccharomyces cerevisiae (strain ATCC 204508 / S288c) (Baker's yeast) protein is Vacuolar membrane protein YOR292C.